A 345-amino-acid polypeptide reads, in one-letter code: MGSNSSPPTVLQLCYENVTGSCVKTPYSPGSRVILYAVFGFGAVLAVFGNLMVMISILHFKQLHSPTNFLIASLACADFGVGISVMPFSMVRSIESCWYFGRSFCTFHTCCDVAFCYSSLFHLSFISIDRYIAVTDPLVYPTKFTVSVSGICIGVSWILPLVYSGAVFYTGVYDDGLEELSSALNCVGGCQVVVNQNWVLIDFLSFLIPTLVMIILYGNIFLVARQQAKKIENIGSKTESSSESYKARVARRERKAAKTLGITVVAFMISWLPYSIDSLVDAFMGFITPAYIYEICVWCAYYNSAMNPLIYALFYPWFKKAIKVIMSGQVFKNSSATMNLFSEQI.

At Met-1–Arg-32 the chain is on the extracellular side. Residue Asn-17 is glycosylated (N-linked (GlcNAc...) asparagine). 2 disulfide bridges follow: Cys-22–Cys-186 and Cys-105–Cys-190. A helical transmembrane segment spans residues Val-33–Val-53. The Cytoplasmic segment spans residues Met-54–Asn-68. A helical transmembrane segment spans residues Phe-69 to Ser-89. At Met-90 to Phe-107 the chain is on the extracellular side. A helical transmembrane segment spans residues His-108 to Ile-128. Residues Asp-129–Ser-147 lie on the Cytoplasmic side of the membrane. A helical transmembrane segment spans residues Val-148–Phe-168. The Extracellular segment spans residues Tyr-169–Asp-202. The extracellular Loop 2 (ECL2) stretch occupies residues Asp-174–Val-187. The helical transmembrane segment at Phe-203–Val-223 threads the bilayer. Residues Ala-224–Thr-259 lie on the Cytoplasmic side of the membrane. A helical membrane pass occupies residues Leu-260–Ile-276. The Extracellular segment spans residues Asp-277–Ala-282. Residues Phe-283 to Tyr-302 form a helical membrane-spanning segment. Topologically, residues Asn-303–Ile-345 are cytoplasmic.

Belongs to the G-protein coupled receptor 1 family. In terms of tissue distribution, specifically expressed in neurons of the olfactory epithelium, to discrete glomeruli predominantly localized to a confined bulb region. Present in a ventral area of the main olfactory epithelium.

It is found in the cell membrane. Its function is as follows. Olfactory receptor specific for trace amines, such as beta-phenylethylamine (beta-PEA). Trace amine compounds are enriched in animal body fluids and act on trace amine-associated receptors (TAARs) to elicit both intraspecific and interspecific innate behaviors. Beta-PEA-binding causes a conformation change that triggers signaling via G(s)-class of G alpha proteins (GNAL or GNAS). The sequence is that of Trace amine-associated receptor 6 from Mus musculus (Mouse).